The sequence spans 161 residues: Nucleotide-binding protein Rfer_2692 (161 aa).

Belongs to the YajQ family.

Functionally, nucleotide-binding protein. This is Nucleotide-binding protein Rfer_2692 from Albidiferax ferrireducens (strain ATCC BAA-621 / DSM 15236 / T118) (Rhodoferax ferrireducens).